Consider the following 117-residue polypeptide: Large ribosomal subunit protein bL17 (117 aa).

Belongs to the bacterial ribosomal protein bL17 family. Part of the 50S ribosomal subunit. Contacts protein L32.

In Campylobacter jejuni subsp. jejuni serotype O:6 (strain 81116 / NCTC 11828), this protein is Large ribosomal subunit protein bL17.